The chain runs to 102 residues: Small ribosomal subunit protein uS10 (102 aa).

Belongs to the universal ribosomal protein uS10 family. Part of the 30S ribosomal subunit.

Its function is as follows. Involved in the binding of tRNA to the ribosomes. The chain is Small ribosomal subunit protein uS10 from Thermosipho melanesiensis (strain DSM 12029 / CIP 104789 / BI429).